Here is a 177-residue protein sequence, read N- to C-terminus: Large ribosomal subunit protein uL6 (177 aa).

This sequence belongs to the universal ribosomal protein uL6 family. As to quaternary structure, part of the 50S ribosomal subunit.

Functionally, this protein binds to the 23S rRNA, and is important in its secondary structure. It is located near the subunit interface in the base of the L7/L12 stalk, and near the tRNA binding site of the peptidyltransferase center. This Vibrio cholerae serotype O1 (strain ATCC 39315 / El Tor Inaba N16961) protein is Large ribosomal subunit protein uL6.